We begin with the raw amino-acid sequence, 185 residues long: Protein GrpE (185 aa).

The tract at residues M1–L40 is disordered.

Belongs to the GrpE family. As to quaternary structure, homodimer.

It localises to the cytoplasm. Its function is as follows. Participates actively in the response to hyperosmotic and heat shock by preventing the aggregation of stress-denatured proteins, in association with DnaK and GrpE. It is the nucleotide exchange factor for DnaK and may function as a thermosensor. Unfolded proteins bind initially to DnaJ; upon interaction with the DnaJ-bound protein, DnaK hydrolyzes its bound ATP, resulting in the formation of a stable complex. GrpE releases ADP from DnaK; ATP binding to DnaK triggers the release of the substrate protein, thus completing the reaction cycle. Several rounds of ATP-dependent interactions between DnaJ, DnaK and GrpE are required for fully efficient folding. The chain is Protein GrpE from Aliarcobacter butzleri (strain RM4018) (Arcobacter butzleri).